The primary structure comprises 250 residues: Small ribosomal subunit protein uS3 (250 aa).

One can recognise a KH type-2 domain in the interval 16 to 85 (IDEYLEKELE…NPQIEVKEVS (70 aa)).

This sequence belongs to the universal ribosomal protein uS3 family. Part of the 30S ribosomal subunit.

Functionally, binds the lower part of the 30S subunit head. The polypeptide is Small ribosomal subunit protein uS3 (Methanobrevibacter smithii (strain ATCC 35061 / DSM 861 / OCM 144 / PS)).